Reading from the N-terminus, the 311-residue chain is Olfactory receptor 1073 (311 aa).

The Extracellular segment spans residues 1-25 (MKQQNDTQILQFLLLGLSENTELQP). N5 carries an N-linked (GlcNAc...) asparagine glycan. The helical transmembrane segment at 26-46 (LIYWLFFSMYLVTVWGNLIII) threads the bilayer. Residues 47–57 (LATVLDFRLHT) are Cytoplasmic-facing. A helical membrane pass occupies residues 58–78 (AMYFFLCNLSFVDICLISTTI). The Extracellular portion of the chain corresponds to 79–97 (PKMLANVHLNHKAITYEGC). Cysteines 97 and 179 form a disulfide. The helical transmembrane segment at 98–118 (IMQIYFFTLFVGLDNFLLAVM) threads the bilayer. The Cytoplasmic segment spans residues 119-133 (AYDRFVAICHPLRYT). The chain crosses the membrane as a helical span at residues 134-154 (SIMTPHLCMSLVLVSWIASVL). A glycan (N-linked (GlcNAc...) asparagine) is linked at N155. The Extracellular portion of the chain corresponds to 155–196 (NSSLQSFLVLQLSFCTEVEIPHFFCELSMLVHLACSDTFLSD). A helical membrane pass occupies residues 197-217 (MAMNVLAALLGGGCLVGILYS). Topologically, residues 218 to 244 (YSKIVSSIQAISSAEGKYKAFSTCVSH) are cytoplasmic. The chain crosses the membrane as a helical span at residues 245–265 (LSVVSLFYCTLLGVYLSSAVT). Residues 266–271 (QNSHST) lie on the Extracellular side of the membrane. The chain crosses the membrane as a helical span at residues 272–292 (AATSLMYTVVTPMLNPFIYSL). Over 293–311 (RNDNIKRALKNFVKKKLEK) the chain is Cytoplasmic.

The protein belongs to the G-protein coupled receptor 1 family. In terms of tissue distribution, tongue specific.

It is found in the cell membrane. Functionally, possible taste receptor. In Rattus norvegicus (Rat), this protein is Olfactory receptor 1073 (Olr1073).